The following is a 726-amino-acid chain: MSTTDDTHNTLSTGKCPFHQGGHDRSAGAGTASRDWWPNQLRVDLLNQHSNRSNPLGEDFDYRKEFSKLDYSALKGDLKALLTDSQPWWPADWGSYVGLFIRMAWHGAGTYRSIDGRGGAGRGQQRFAPLNSWPDNVSLDKARRLLWPIKQKYGQKISWADLFILAGNVALENSGFRTFGFGAGREDVWEPDLDVNWGDEKAWLTHRHPEALAKAPLGATEMGLIYVNPEGPDHSGEPLSAAAAIRATFGNMGMNDEETVALIAGGHTLGKTHGAAAASHVGADPEAAPIEAQGLGWASSYGSGVGADAITSGLEVVWTQTPTQWSNYFFENLFKYEWVQTRSPAGAIQFEAVDAPDIIPDPFDPSKKRKPTMLVTDLTLRFDPEFEKISRRFLNDPQAFNEAFARAWFKLTHRDMGPKARYIGPEVPKEDLIWQDPLPQPLYQPTQEDIINLKAAIAASGLSISEMVSVAWASASTFRGGDKRGGANGARLALAPQRDWEVNAVAARVLPVLEEIQKTTNKASLADIIVLAGVVGIEQAAAAAGVSISVPFAPGRVDARQDQTDIEMFSLLEPIADGFRNYRARLDVSTTESLLIDKAQQLTLTAPEMTVLVGGMRVLGTNFDGSQNGVFTDRPGVLSTDFFANLLDMRYEWKPTDDANELFEGRDRLTGEVKYTATRADLVFGSNSVLRALAEVYACSDAHEKFVKDFVAAWVKVMNLDRFDLL.

The segment at 1–33 (MSTTDDTHNTLSTGKCPFHQGGHDRSAGAGTAS) is disordered. The segment at residues 105 to 226 (WHGAGTYRSI…LGATEMGLIY (122 aa)) is a cross-link (tryptophyl-tyrosyl-methioninium (Trp-Tyr) (with M-252)). The active-site Proton acceptor is the His106. A cross-link (tryptophyl-tyrosyl-methioninium (Tyr-Met) (with W-105)) is located at residues 226–252 (YVNPEGPDHSGEPLSAAAAIRATFGNM). His267 contacts heme b.

It belongs to the peroxidase family. Peroxidase/catalase subfamily. As to quaternary structure, homodimer or homotetramer. Heme b serves as cofactor. In terms of processing, formation of the three residue Trp-Tyr-Met cross-link is important for the catalase, but not the peroxidase activity of the enzyme.

The catalysed reaction is H2O2 + AH2 = A + 2 H2O. It catalyses the reaction 2 H2O2 = O2 + 2 H2O. Its function is as follows. Bifunctional enzyme with both catalase and broad-spectrum peroxidase activity. The polypeptide is Catalase-peroxidase (Salmonella schwarzengrund (strain CVM19633)).